Consider the following 212-residue polypeptide: Large ribosomal subunit protein uL3 (212 aa).

The interval 127–161 (NFKRGPMAHGSKNHRLPGSTGAGTTPGRVFPGKRM) is disordered.

This sequence belongs to the universal ribosomal protein uL3 family. In terms of assembly, part of the 50S ribosomal subunit. Forms a cluster with proteins L14 and L19.

One of the primary rRNA binding proteins, it binds directly near the 3'-end of the 23S rRNA, where it nucleates assembly of the 50S subunit. This is Large ribosomal subunit protein uL3 from Thermosynechococcus vestitus (strain NIES-2133 / IAM M-273 / BP-1).